The chain runs to 68 residues: Small cysteine-rich protein 5 (68 aa).

Residues 1 to 24 (MAVKFHLCLLLIILVGMGAHVAFA) form the signal peptide.

This sequence belongs to the Cnidaria small cysteine-rich protein (SCRiP) family. gamma subfamily. In terms of processing, contains 4 disulfide bonds.

It localises to the secreted. Its subcellular location is the nematocyst. In terms of biological role, induces neurotoxic symptoms on zebrafish. Has also been claimed to be implied in calcification, but tests on homolog proteins suggest that proteins of this family have a neurotoxic function and not a calcification function. The chain is Small cysteine-rich protein 5 from Orbicella faveolata (Mountainous star coral).